We begin with the raw amino-acid sequence, 272 residues long: Bifunctional protein FolD 2 (272 aa).

NADP(+) is bound by residues 157–159 (GRS), Thr182, and Ile223.

It belongs to the tetrahydrofolate dehydrogenase/cyclohydrolase family. Homodimer.

It carries out the reaction (6R)-5,10-methylene-5,6,7,8-tetrahydrofolate + NADP(+) = (6R)-5,10-methenyltetrahydrofolate + NADPH. The enzyme catalyses (6R)-5,10-methenyltetrahydrofolate + H2O = (6R)-10-formyltetrahydrofolate + H(+). The protein operates within one-carbon metabolism; tetrahydrofolate interconversion. In terms of biological role, catalyzes the oxidation of 5,10-methylenetetrahydrofolate to 5,10-methenyltetrahydrofolate and then the hydrolysis of 5,10-methenyltetrahydrofolate to 10-formyltetrahydrofolate. This Syntrophomonas wolfei subsp. wolfei (strain DSM 2245B / Goettingen) protein is Bifunctional protein FolD 2.